The following is a 24-amino-acid chain: Cytochrome c oxidase subunit 7A2, mitochondrial (24 aa).

A compositionally biased stretch (basic and acidic residues) spans 1 to 13; sequence FENKVPEKQKLFQ. The interval 1–24 is disordered; the sequence is FENKVPEKQKLFQEDNGIPVHLKG. An N6-acetyllysine modification is found at lysine 10.

Belongs to the cytochrome c oxidase VIIa family. As to quaternary structure, component of the cytochrome c oxidase (complex IV, CIV), a multisubunit enzyme composed of 14 subunits. The complex is composed of a catalytic core of 3 subunits MT-CO1, MT-CO2 and MT-CO3, encoded in the mitochondrial DNA, and 11 supernumerary subunits COX4I, COX5A, COX5B, COX6A, COX6B, COX6C, COX7A, COX7B, COX7C, COX8 and NDUFA4, which are encoded in the nuclear genome. The complex exists as a monomer or a dimer and forms supercomplexes (SCs) in the inner mitochondrial membrane with NADH-ubiquinone oxidoreductase (complex I, CI) and ubiquinol-cytochrome c oxidoreductase (cytochrome b-c1 complex, complex III, CIII), resulting in different assemblies (supercomplex SCI(1)III(2)IV(1) and megacomplex MCI(2)III(2)IV(2)). Interacts with PET100.

The protein localises to the mitochondrion inner membrane. It participates in energy metabolism; oxidative phosphorylation. Component of the cytochrome c oxidase, the last enzyme in the mitochondrial electron transport chain which drives oxidative phosphorylation. The respiratory chain contains 3 multisubunit complexes succinate dehydrogenase (complex II, CII), ubiquinol-cytochrome c oxidoreductase (cytochrome b-c1 complex, complex III, CIII) and cytochrome c oxidase (complex IV, CIV), that cooperate to transfer electrons derived from NADH and succinate to molecular oxygen, creating an electrochemical gradient over the inner membrane that drives transmembrane transport and the ATP synthase. Cytochrome c oxidase is the component of the respiratory chain that catalyzes the reduction of oxygen to water. Electrons originating from reduced cytochrome c in the intermembrane space (IMS) are transferred via the dinuclear copper A center (CU(A)) of subunit 2 and heme A of subunit 1 to the active site in subunit 1, a binuclear center (BNC) formed by heme A3 and copper B (CU(B)). The BNC reduces molecular oxygen to 2 water molecules using 4 electrons from cytochrome c in the IMS and 4 protons from the mitochondrial matrix. In Ovis aries (Sheep), this protein is Cytochrome c oxidase subunit 7A2, mitochondrial (COX7A2).